Here is an 80-residue protein sequence, read N- to C-terminus: Nuclear protein 1 (80 aa).

2 disordered regions span residues 1-21 (MATL…EDED) and 38-80 (VGGG…KAWR). A compositionally biased stretch (basic and acidic residues) spans 61 to 80 (GHERKLLTKFQNSERKKAWR). The Nuclear localization signal signature appears at 64–80 (RKLLTKFQNSERKKAWR).

Belongs to the NUPR family. In terms of assembly, monomer. Directly interacts with MSL1 and binds MORF4L1, two components of histone acetyltransferase complex; the interaction with MORF4L1 may be mediated by MSL1. Interacts with EP300; this interaction enhances the effect of EP300 on PAX2 transcription factor activity. Interacts with PAXIP1; this interaction prevents PAXIP1 inhibition of PAX2 transcription factor activity. Interacts with COPS5; this interaction allows COPS5-dependent CDKN1B nuclear to cytoplasm translocation. Interacts with RNF2. Interacts with FOXO3; this interaction represses FOXO3 transactivation. Interacts with PTMA; regulates apoptotic process. Interacts with MYOD1, EP300 and DDX5; this interaction coordinates the association of anti-proliferative and pro-myogenic proteins at the myogenin promoter. Interacts with TP53; interaction is stress-dependent. Forms a complex with EP300 and TP53; this complex binds CDKN1A promoter leading to transcriptional induction of CDKN1A. In terms of processing, phosphorylated. Phosphorylation promotes DNA-binding activity. Post-translationally, acetylated. As to expression, highly expressed in pancreas and both ovaries and testes.

Its subcellular location is the nucleus. It is found in the cytoplasm. It localises to the perinuclear region. In terms of biological role, transcription regulator that converts stress signals into a program of gene expression that empowers cells with resistance to the stress induced by a change in their microenvironment. Thereby participates in the regulation of many processes namely cell-cycle, apoptosis, autophagy and DNA repair responses. Controls cell cycle progression and protects cells from genotoxic stress induced by doxorubicin through the complex formation with TP53 and EP300 that binds CDKN1A promoter leading to transcriptional induction of CDKN1A. Protects pancreatic cancer cells from stress-induced cell death by binding the RELB promoter and activating its transcription, leading to IER3 transactivation. Negatively regulates apoptosis through interaction with PTMA. Inhibits autophagy-induced apoptosis in cardiac cells through FOXO3 interaction, inducing cytoplasmic translocation of FOXO3 thereby preventing the FOXO3 association with the pro-autophagic BNIP3 promoter. Inhibits cell growth and facilitates programmed cell death by apoptosis after adriamycin-induced DNA damage through transactivation of TP53. Regulates methamphetamine-induced apoptosis and autophagy through DDIT3-mediated endoplasmic reticulum stress pathway. Participates in DNA repair following gamma-irradiation by facilitating DNA access of the transcription machinery through interaction with MSL1 leading to inhibition of histone H4' Lys-16' acetylation (H4K16ac). Coactivator of PAX2 transcription factor activity, both by recruiting the EP300 cofactor to increase PAX2 transcription factor activity and by binding PAXIP1 to suppress PAXIP1-induced inhibition on PAX2. Positively regulates cell cycle progression through interaction with COPS5 inducing cytoplasmic translocation of CDKN1B leading to the CDKN1B degradation. Coordinates, through its interaction with EP300, the assiociation of MYOD1, EP300 and DDX5 to the MYOG promoter, leading to inhibition of cell-cycle progression and myogenic differentiation promotion. Negatively regulates beta cell proliferation via inhibition of cell-cycle regulatory genes expression through the suppression of their promoter activities. Also required for LHB expression and ovarian maturation. Exacerbates CNS inflammation and demyelination upon cuprizone treatment. This Mus musculus (Mouse) protein is Nuclear protein 1.